A 197-amino-acid polypeptide reads, in one-letter code: Casparian strip membrane protein 3 (197 aa).

At 1 to 35 the chain is on the cytoplasmic side; that stretch reads MSARVDIPADTSAAAKGTAPLIAASTHVKGGYKKG. Residues 36-56 traverse the membrane as a helical segment; the sequence is LAIFDLVLRLGAVVTALAAAA. The Extracellular segment spans residues 57 to 85; that stretch reads TMGTTDQTLPFFTQFFQFQASYDDLPTFQ. Residues 86–106 form a helical membrane-spanning segment; the sequence is FFVIAMAIVSGYLVLSLPFSI. Residues 107-119 lie on the Cytoplasmic side of the membrane; that stretch reads VAIIRPHATGPRL. A helical membrane pass occupies residues 120–140; that stretch reads LLIILDTVALTLNTAAAAAAV. The Extracellular portion of the chain corresponds to 141–171; sequence AIVDLAQNGNSSANWLGICQQFGDFCQKASG. Asn-150 carries N-linked (GlcNAc...) asparagine glycosylation. Residues 172-192 form a helical membrane-spanning segment; it reads AVVASFIAAGVLLFLIVISAL. The Cytoplasmic portion of the chain corresponds to 193–197; sequence ALRKR.

The protein belongs to the Casparian strip membrane proteins (CASP) family. In terms of assembly, homodimer and heterodimers.

Its subcellular location is the cell membrane. Its function is as follows. Regulates membrane-cell wall junctions and localized cell wall deposition. Required for establishment of the Casparian strip membrane domain (CSD) and the subsequent formation of Casparian strips, a cell wall modification of the root endodermis that determines an apoplastic barrier between the intraorganismal apoplasm and the extraorganismal apoplasm and prevents lateral diffusion. In Populus trichocarpa (Western balsam poplar), this protein is Casparian strip membrane protein 3.